The following is a 74-amino-acid chain: ATP synthase subunit c (74 aa).

The next 2 helical transmembrane spans lie at 9 to 29 (IGAG…GNIF) and 54 to 74 (FALT…ILFV).

Belongs to the ATPase C chain family. In terms of assembly, F-type ATPases have 2 components, F(1) - the catalytic core - and F(0) - the membrane proton channel. F(1) has five subunits: alpha(3), beta(3), gamma(1), delta(1), epsilon(1). F(0) has three main subunits: a(1), b(2) and c(10-14). The alpha and beta chains form an alternating ring which encloses part of the gamma chain. F(1) is attached to F(0) by a central stalk formed by the gamma and epsilon chains, while a peripheral stalk is formed by the delta and b chains.

The protein resides in the cell inner membrane. In terms of biological role, f(1)F(0) ATP synthase produces ATP from ADP in the presence of a proton or sodium gradient. F-type ATPases consist of two structural domains, F(1) containing the extramembraneous catalytic core and F(0) containing the membrane proton channel, linked together by a central stalk and a peripheral stalk. During catalysis, ATP synthesis in the catalytic domain of F(1) is coupled via a rotary mechanism of the central stalk subunits to proton translocation. Key component of the F(0) channel; it plays a direct role in translocation across the membrane. A homomeric c-ring of between 10-14 subunits forms the central stalk rotor element with the F(1) delta and epsilon subunits. This chain is ATP synthase subunit c, found in Gluconacetobacter diazotrophicus (strain ATCC 49037 / DSM 5601 / CCUG 37298 / CIP 103539 / LMG 7603 / PAl5).